The following is a 352-amino-acid chain: RNA 3'-terminal phosphate cyclase (352 aa).

Residues Gln102 and 292–296 (HMGDQ) each bind ATP. His318 acts as the Tele-AMP-histidine intermediate in catalysis.

It belongs to the RNA 3'-terminal cyclase family. Type 1 subfamily.

Its subcellular location is the cytoplasm. The enzyme catalyses a 3'-end 3'-phospho-ribonucleotide-RNA + ATP = a 3'-end 2',3'-cyclophospho-ribonucleotide-RNA + AMP + diphosphate. In terms of biological role, catalyzes the conversion of 3'-phosphate to a 2',3'-cyclic phosphodiester at the end of RNA. The mechanism of action of the enzyme occurs in 3 steps: (A) adenylation of the enzyme by ATP; (B) transfer of adenylate to an RNA-N3'P to produce RNA-N3'PP5'A; (C) and attack of the adjacent 2'-hydroxyl on the 3'-phosphorus in the diester linkage to produce the cyclic end product. The biological role of this enzyme is unknown but it is likely to function in some aspects of cellular RNA processing. In Methanopyrus kandleri (strain AV19 / DSM 6324 / JCM 9639 / NBRC 100938), this protein is RNA 3'-terminal phosphate cyclase.